A 157-amino-acid chain; its full sequence is Small ribosomal subunit protein uS13 (157 aa).

The protein belongs to the universal ribosomal protein uS13 family. In terms of assembly, part of the 30S ribosomal subunit. Forms a loose heterodimer with protein S19. Forms two bridges to the 50S subunit in the 70S ribosome.

Functionally, located at the top of the head of the 30S subunit, it contacts several helices of the 16S rRNA. In the 70S ribosome it contacts the 23S rRNA (bridge B1a) and protein L5 of the 50S subunit (bridge B1b), connecting the 2 subunits; these bridges are implicated in subunit movement. The protein is Small ribosomal subunit protein uS13 of Thermofilum pendens (strain DSM 2475 / Hrk 5).